The sequence spans 174 residues: Adenine phosphoribosyltransferase (174 aa).

This sequence belongs to the purine/pyrimidine phosphoribosyltransferase family. In terms of assembly, homodimer.

It is found in the cytoplasm. It catalyses the reaction AMP + diphosphate = 5-phospho-alpha-D-ribose 1-diphosphate + adenine. It participates in purine metabolism; AMP biosynthesis via salvage pathway; AMP from adenine: step 1/1. Its function is as follows. Catalyzes a salvage reaction resulting in the formation of AMP, that is energically less costly than de novo synthesis. This is Adenine phosphoribosyltransferase from Dichelobacter nodosus (strain VCS1703A).